The primary structure comprises 379 residues: Queuine tRNA-ribosyltransferase (379 aa).

The Proton acceptor role is filled by D94. Residues D94–F98, D148, Q191, and G218 contribute to the substrate site. The RNA binding stretch occupies residues G249–A255. D268 functions as the Nucleophile in the catalytic mechanism. The tract at residues T273–R277 is RNA binding; important for wobble base 34 recognition. Residues C306, C308, C311, and H337 each contribute to the Zn(2+) site.

This sequence belongs to the queuine tRNA-ribosyltransferase family. In terms of assembly, homodimer. Within each dimer, one monomer is responsible for RNA recognition and catalysis, while the other monomer binds to the replacement base PreQ1. Requires Zn(2+) as cofactor.

It carries out the reaction 7-aminomethyl-7-carbaguanine + guanosine(34) in tRNA = 7-aminomethyl-7-carbaguanosine(34) in tRNA + guanine. It functions in the pathway tRNA modification; tRNA-queuosine biosynthesis. Its function is as follows. Catalyzes the base-exchange of a guanine (G) residue with the queuine precursor 7-aminomethyl-7-deazaguanine (PreQ1) at position 34 (anticodon wobble position) in tRNAs with GU(N) anticodons (tRNA-Asp, -Asn, -His and -Tyr). Catalysis occurs through a double-displacement mechanism. The nucleophile active site attacks the C1' of nucleotide 34 to detach the guanine base from the RNA, forming a covalent enzyme-RNA intermediate. The proton acceptor active site deprotonates the incoming PreQ1, allowing a nucleophilic attack on the C1' of the ribose to form the product. After dissociation, two additional enzymatic reactions on the tRNA convert PreQ1 to queuine (Q), resulting in the hypermodified nucleoside queuosine (7-(((4,5-cis-dihydroxy-2-cyclopenten-1-yl)amino)methyl)-7-deazaguanosine). This Macrococcus caseolyticus (strain JCSC5402) (Macrococcoides caseolyticum) protein is Queuine tRNA-ribosyltransferase.